The following is a 380-amino-acid chain: Cytochrome b (380 aa).

4 helical membrane passes run 34–54 (FGSL…LLAA), 78–99 (WLIR…YLHI), 114–134 (WNIG…GYVL), and 179–199 (FFAL…VHLT). Positions 84 and 98 each coordinate heme b. H183 and H197 together coordinate heme b. H202 serves as a coordination point for a ubiquinone. 4 helical membrane-spanning segments follow: residues 227 to 247 (IKDI…ALFS), 289 to 309 (LGGV…PLLH), 321 to 341 (LSQI…WVGS), and 348 to 368 (FIII…VLFP).

This sequence belongs to the cytochrome b family. In terms of assembly, the cytochrome bc1 complex contains 11 subunits: 3 respiratory subunits (MT-CYB, CYC1 and UQCRFS1), 2 core proteins (UQCRC1 and UQCRC2) and 6 low-molecular weight proteins (UQCRH/QCR6, UQCRB/QCR7, UQCRQ/QCR8, UQCR10/QCR9, UQCR11/QCR10 and a cleavage product of UQCRFS1). This cytochrome bc1 complex then forms a dimer. Heme b is required as a cofactor.

The protein resides in the mitochondrion inner membrane. In terms of biological role, component of the ubiquinol-cytochrome c reductase complex (complex III or cytochrome b-c1 complex) that is part of the mitochondrial respiratory chain. The b-c1 complex mediates electron transfer from ubiquinol to cytochrome c. Contributes to the generation of a proton gradient across the mitochondrial membrane that is then used for ATP synthesis. This chain is Cytochrome b (MT-CYB), found in Paradisaea rubra (Red bird of paradise).